Reading from the N-terminus, the 137-residue chain is Beta-synuclein (137 aa).

Repeat copies occupy residues 20 to 30 (EKTKQGVTEAA) and 31 to 41 (EKTKEGVLYVG). The segment at 20 to 67 (EKTKQGVTEAAEKTKEGVLYVGSKTKEGVVQGVASVAEKTKEQASHLG) is 4 X 11 AA tandem repeats of [EGS]-K-T-K-[EQ]-[GQ]-V-X(4). One copy of the 3; approximate repeat lies at 42–56 (SKTKEGVVQGVASVA). Repeat unit 4 spans residues 57–67 (EKTKEQASHLG). The span at 88–97 (EFPTDLKPEE) shows a compositional bias: basic and acidic residues. The interval 88–137 (EFPTDLKPEEVAQEAAEEPLIEPLMEPEGESYEDSPQEEYQEYEPEAKGP) is disordered. The segment covering 98–131 (VAQEAAEEPLIEPLMEPEGESYEDSPQEEYQEYE) has biased composition (acidic residues). At Ser-118 the chain carries Phosphoserine; by BARK1, CK2 and GRK5.

This sequence belongs to the synuclein family. Post-translationally, phosphorylated. Phosphorylation by G-protein coupled receptor kinases (GRK) is more efficient than phosphorylation by CK1, CK2 and CaM-kinase II. In terms of tissue distribution, expressed specifically in brain.

Its subcellular location is the cytoplasm. In terms of biological role, may be involved in neuronal plasticity. The chain is Beta-synuclein (Sncb) from Rattus norvegicus (Rat).